The following is a 134-amino-acid chain: Small ribosomal subunit protein uS8 (134 aa).

This sequence belongs to the universal ribosomal protein uS8 family. In terms of assembly, part of the 30S ribosomal subunit. Contacts proteins S5 and S12.

Functionally, one of the primary rRNA binding proteins, it binds directly to 16S rRNA central domain where it helps coordinate assembly of the platform of the 30S subunit. This chain is Small ribosomal subunit protein uS8, found in Thermosipho africanus (strain TCF52B).